Here is a 178-residue protein sequence, read N- to C-terminus: Deoxycytidylate deaminase (178 aa).

A CMP/dCMP-type deaminase domain is found at 14-146 (EWPEYFMAVA…EATAARLLFD (133 aa)). Residue histidine 84 participates in Zn(2+) binding. Glutamate 86 serves as the catalytic Proton donor. Zn(2+) is bound by residues cysteine 110 and cysteine 113. Serine 174 is modified (phosphoserine).

It belongs to the cytidine and deoxycytidylate deaminase family. In terms of assembly, homohexamer. Zn(2+) serves as cofactor.

It catalyses the reaction dCMP + H2O + H(+) = dUMP + NH4(+). It carries out the reaction 5-hydroxymethyl-dCMP + H2O + H(+) = 5-hydroxymethyl-dUMP + NH4(+). Its activity is regulated as follows. Allosteric enzyme whose activity is greatly influenced by the end products of its metabolic pathway, dCTP and dTTP. In terms of biological role, catalyzes the deamination of dCMP to dUMP, providing the nucleoside monophosphate substrate for the thymidylate synthase/TYMS. Also, part of a nucleotide salvage pathway that eliminates epigenetically modified 5-hydroxymethyl-dCMP (hmdCMP) in a two-step process entailing deamination to cytotoxic 5-hydroxymethyl-dUMP (hmdUMP), followed by its hydrolysis into 5-hydroxymethyluracil (hmU) and 2-deoxy-D-ribose 5-phosphate (deoxyribosephosphate). Catalyzes the first step in that pathway, the deamination of 5-hydroxymethyl-dCMP (hmdCMP). In Pongo abelii (Sumatran orangutan), this protein is Deoxycytidylate deaminase.